A 467-amino-acid polypeptide reads, in one-letter code: tRNA-2-methylthio-N(6)-dimethylallyladenosine synthase (467 aa).

Residues 5 to 125 (RKLHIKSYGC…LPQLLAQASR (121 aa)) form the MTTase N-terminal domain. Positions 14, 50, 88, 166, 170, and 173 each coordinate [4Fe-4S] cluster. A Radical SAM core domain is found at 152–384 (RARGVSAFVT…QSLIDSQQAA (233 aa)). In terms of domain architecture, TRAM spans 387–449 (KAAIGSVVDV…RYSLLGELVA (63 aa)).

It belongs to the methylthiotransferase family. MiaB subfamily. Monomer. [4Fe-4S] cluster serves as cofactor.

It localises to the cytoplasm. The catalysed reaction is N(6)-dimethylallyladenosine(37) in tRNA + (sulfur carrier)-SH + AH2 + 2 S-adenosyl-L-methionine = 2-methylsulfanyl-N(6)-dimethylallyladenosine(37) in tRNA + (sulfur carrier)-H + 5'-deoxyadenosine + L-methionine + A + S-adenosyl-L-homocysteine + 2 H(+). Catalyzes the methylthiolation of N6-(dimethylallyl)adenosine (i(6)A), leading to the formation of 2-methylthio-N6-(dimethylallyl)adenosine (ms(2)i(6)A) at position 37 in tRNAs that read codons beginning with uridine. The protein is tRNA-2-methylthio-N(6)-dimethylallyladenosine synthase of Bradyrhizobium sp. (strain ORS 278).